The following is a 527-amino-acid chain: Matrix metalloproteinase-19 (527 aa).

Residues 1-18 (MDWQQLWLAFLLPMTVSG) form the signal peptide. The propeptide occupies 19-98 (RALGPTEKEA…EDPFNQKSLK (80 aa)). A Cysteine switch motif is present at residues 84–91 (PRCGLEDP). Cys-86 is a binding site for Zn(2+). An N-linked (GlcNAc...) asparagine glycan is attached at Asn-109. Zn(2+) is bound at residue His-213. Glu-214 is an active-site residue. Zn(2+) contacts are provided by His-217 and His-223. Hemopexin repeat units follow at residues 286 to 333 (PNPC…WEGL), 334 to 372 (PGNLDAAVYSPRTRRTHFFKGNKVWRYVDFKMSPGFPMK), 377 to 425 (EPNL…FTGV), and 426 to 471 (PDRP…WMHC). An intrachain disulfide couples Cys-289 to Cys-471. Asn-464 and Asn-479 each carry an N-linked (GlcNAc...) asparagine glycan. Residues 473-500 (SQTPDTNSSTGDVTPSTTDTVLGTTPST) are disordered. Asp-512 carries the GPI-anchor amidated aspartate lipid modification. Positions 513 to 527 (SASLSFSANVTLLGA) are cleaved as a propeptide — removed in mature form. N-linked (GlcNAc...) asparagine glycosylation is present at Asn-521.

Belongs to the peptidase M10A family. The cofactor is Zn(2+). Ca(2+) is required as a cofactor. In terms of processing, activated by autolytic cleavage after Lys-98. Post-translationally, tyrosine phosphorylated by PKDCC/VLK. Highly expressed in the liver. Expressed in the arterial tunica media of large blood vessels.

It localises to the cell membrane. It is found in the secreted. Its subcellular location is the extracellular space. The protein localises to the extracellular matrix. Endopeptidase that degrades various components of the extracellular matrix, such as aggrecan and cartilage oligomeric matrix protein (comp), during development, haemostasis and pathological conditions (arthritic disease). May also play a role in neovascularization or angiogenesis. Hydrolyzes collagen type IV, laminin, nidogen, nascin-C isoform, fibronectin, and type I gelatin. This is Matrix metalloproteinase-19 (Mmp19) from Mus musculus (Mouse).